Consider the following 363-residue polypeptide: U-box domain-containing protein 62 (363 aa).

The tract at residues 74–117 (KPIIGNPNDSGGSDGEDDVDVEEEDEDDDLDGNEGDIGMNKDAG) is disordered. The segment covering 87-107 (DGEDDVDVEEEDEDDDLDGNE) has biased composition (acidic residues). One can recognise a U-box domain in the interval 181 to 253 (SLRTILSDPT…QAFCREENSQ (73 aa)). A disordered region spans residues 343-363 (AKAPEDPSAKATPNKMVSNWL).

It catalyses the reaction S-ubiquitinyl-[E2 ubiquitin-conjugating enzyme]-L-cysteine + [acceptor protein]-L-lysine = [E2 ubiquitin-conjugating enzyme]-L-cysteine + N(6)-ubiquitinyl-[acceptor protein]-L-lysine.. Its pathway is protein modification; protein ubiquitination. Functions as an E3 ubiquitin ligase. The sequence is that of U-box domain-containing protein 62 (PUB62) from Arabidopsis thaliana (Mouse-ear cress).